The following is a 145-amino-acid chain: Mitochondrial import receptor subunit TOM20 homolog (145 aa).

Residues 1 to 6 are Mitochondrial intermembrane-facing; it reads MVGRNS. Residues 7 to 24 traverse the membrane as a helical segment; the sequence is AIAAGVCGALFIGYCIYF. Residues 25-145 are Cytoplasmic-facing; the sequence is DRKRRSDPNF…AQSLAEDDVE (121 aa). Glycyl lysine isopeptide (Lys-Gly) (interchain with G-Cter in ubiquitin) cross-links involve residues lysine 35, lysine 56, lysine 61, and lysine 68. 2 positions are modified to phosphoserine: serine 135 and serine 138.

It belongs to the Tom20 family. As to quaternary structure, forms part of the preprotein translocase complex of the outer mitochondrial membrane (TOM complex) which consists of at least 7 different proteins (TOMM5, TOMM6, TOMM7, TOMM20, TOMM22, TOMM40 and TOMM70). Interacts with TOM22. Interacts with APEX1. Interacts with TBC1D21. Upon mitochondrial depolarization, interacts with PINK1; the interaction is required for PINK1-TOM-TIM23 supercomplex formation which is critical for PINK1 stabilization at the outer mitochondrial membrane, kinase activation and downstream mitophagy. Ubiquitinated by PRKN during mitophagy, leading to its degradation and enhancement of mitophagy. Deubiquitinated by USP30.

Its subcellular location is the mitochondrion outer membrane. Its function is as follows. Central component of the receptor complex responsible for the recognition and translocation of cytosolically synthesized mitochondrial preproteins. Together with TOM22 functions as the transit peptide receptor at the surface of the mitochondrion outer membrane and facilitates the movement of preproteins into the TOM40 translocation pore. Required for the translocation across the mitochondrial outer membrane of cytochrome P450 monooxygenases. In Bos taurus (Bovine), this protein is Mitochondrial import receptor subunit TOM20 homolog (TOMM20).